Reading from the N-terminus, the 332-residue chain is Biotin synthase (332 aa).

Residues 53–282 form the Radical SAM core domain; it reads YFGKKVKLNM…TKEIRISGGR (230 aa). [4Fe-4S] cluster-binding residues include C71, C75, and C78. [2Fe-2S] cluster is bound by residues C115, C147, C207, and R277.

The protein belongs to the radical SAM superfamily. Biotin synthase family. Homodimer. [4Fe-4S] cluster serves as cofactor. It depends on [2Fe-2S] cluster as a cofactor.

It catalyses the reaction (4R,5S)-dethiobiotin + (sulfur carrier)-SH + 2 reduced [2Fe-2S]-[ferredoxin] + 2 S-adenosyl-L-methionine = (sulfur carrier)-H + biotin + 2 5'-deoxyadenosine + 2 L-methionine + 2 oxidized [2Fe-2S]-[ferredoxin]. It participates in cofactor biosynthesis; biotin biosynthesis; biotin from 7,8-diaminononanoate: step 2/2. Catalyzes the conversion of dethiobiotin (DTB) to biotin by the insertion of a sulfur atom into dethiobiotin via a radical-based mechanism. In Bacillus anthracis, this protein is Biotin synthase.